The following is a 406-amino-acid chain: Peptide transporter imqD (406 aa).

Residues 1–25 (MTAPADSTEKSETSETTTLQTTEVS) form a disordered region. Residues 14-25 (SETTTLQTTEVS) are compositionally biased toward low complexity. The next 6 helical transmembrane spans lie at 184–204 (GLVA…LSQA), 220–240 (IPND…GPVI), 262–282 (ATGF…QKII), 309–329 (VFLQ…SFVT), 344–364 (AVVQ…GIAI), and 373–393 (LIWM…VFWI).

This sequence belongs to the major facilitator superfamily. Proton-dependent oligopeptide transporter (POT/PTR) (TC 2.A.17) family.

It localises to the membrane. In terms of biological role, peptide transporter; part of the gene cluster that mediates the biosynthesis of imizoquins A to D, tripeptide-derived alkaloids that serve a protective role against oxidative stress that are essential for normal germination. The polypeptide is Peptide transporter imqD (Aspergillus flavus (strain ATCC 200026 / FGSC A1120 / IAM 13836 / NRRL 3357 / JCM 12722 / SRRC 167)).